The sequence spans 364 residues: Ribosomal RNA large subunit methyltransferase M (364 aa).

S-adenosyl-L-methionine-binding positions include Ser-198, 231-234 (APGG), Asp-250, Asp-270, and Asp-286. Lys-315 functions as the Proton acceptor in the catalytic mechanism.

It belongs to the class I-like SAM-binding methyltransferase superfamily. RNA methyltransferase RlmE family. RlmM subfamily. In terms of assembly, monomer.

The protein localises to the cytoplasm. It carries out the reaction cytidine(2498) in 23S rRNA + S-adenosyl-L-methionine = 2'-O-methylcytidine(2498) in 23S rRNA + S-adenosyl-L-homocysteine + H(+). In terms of biological role, catalyzes the 2'-O-methylation at nucleotide C2498 in 23S rRNA. The polypeptide is Ribosomal RNA large subunit methyltransferase M (Thauera aminoaromatica).